Consider the following 202-residue polypeptide: Alpha-1-acid glycoprotein (202 aa).

The N-terminal stretch at 1–18 is a signal peptide; it reads MALLWALAVLSHLPLLDA. 5 N-linked (GlcNAc...) asparagine glycosylation sites follow: N34, N57, N94, N104, and N136. The cysteines at positions 91 and 184 are disulfide-linked.

The protein belongs to the calycin superfamily. Lipocalin family.

It localises to the secreted. Functions as a transport protein in the blood stream. Binds various ligands in the interior of its beta-barrel domain. Appears to function in modulating the activity of the immune system during the acute-phase reaction. The polypeptide is Alpha-1-acid glycoprotein (ORM1) (Bos taurus (Bovine)).